A 126-amino-acid chain; its full sequence is MAHVKRGVIARARHKKVLKQAKGYYGARSRTYRTARQAIIKAGQYSYRDRRQRKRYFRKLWITRINAAVRENQISYSKFMYGLKKASIAVDRKMLSELAIFDNVSFCSLIKSSKDALTSIELNKNL.

Belongs to the bacterial ribosomal protein bL20 family.

Its function is as follows. Binds directly to 23S ribosomal RNA and is necessary for the in vitro assembly process of the 50S ribosomal subunit. It is not involved in the protein synthesizing functions of that subunit. This Buchnera aphidicola subsp. Baizongia pistaciae (strain Bp) protein is Large ribosomal subunit protein bL20.